A 537-amino-acid chain; its full sequence is Ribonuclease Y (537 aa).

A helical membrane pass occupies residues Phe4 to Val24. A disordered region spans residues Ala112–Glu148. The KH domain occupies Thr227 to Met287. An HD domain is found at Val353–Ala446.

The protein belongs to the RNase Y family.

Its subcellular location is the cell membrane. In terms of biological role, endoribonuclease that initiates mRNA decay. The chain is Ribonuclease Y from Streptococcus sanguinis (strain SK36).